The sequence spans 189 residues: Peptidyl-tRNA hydrolase (189 aa).

TRNA is bound at residue Y17. The Proton acceptor role is filled by H22. Residues F65, N67, and N113 each contribute to the tRNA site.

Belongs to the PTH family. Monomer.

It localises to the cytoplasm. The catalysed reaction is an N-acyl-L-alpha-aminoacyl-tRNA + H2O = an N-acyl-L-amino acid + a tRNA + H(+). Hydrolyzes ribosome-free peptidyl-tRNAs (with 1 or more amino acids incorporated), which drop off the ribosome during protein synthesis, or as a result of ribosome stalling. Its function is as follows. Catalyzes the release of premature peptidyl moieties from peptidyl-tRNA molecules trapped in stalled 50S ribosomal subunits, and thus maintains levels of free tRNAs and 50S ribosomes. In Mycoplasma genitalium (strain ATCC 33530 / DSM 19775 / NCTC 10195 / G37) (Mycoplasmoides genitalium), this protein is Peptidyl-tRNA hydrolase.